The sequence spans 338 residues: UDP-glucose 4-epimerase (338 aa).

Residues 11–12 (YI), 31–36 (DNLCNS), 58–59 (DI), 80–84 (FAGLK), N99, S124, Y149, K153, and F178 each bind NAD(+). Substrate-binding residues include S124 and Y149. Y149 functions as the Proton acceptor in the catalytic mechanism. Substrate contacts are provided by residues N179, 199–200 (NL), 216–218 (AVF), R231, 292–295 (RDGD), and Y299.

The protein belongs to the NAD(P)-dependent epimerase/dehydratase family. In terms of assembly, homodimer. Requires NAD(+) as cofactor.

The catalysed reaction is UDP-alpha-D-glucose = UDP-alpha-D-galactose. It participates in carbohydrate metabolism; galactose metabolism. Functionally, involved in the metabolism of galactose. Catalyzes the conversion of UDP-galactose (UDP-Gal) to UDP-glucose (UDP-Glc) through a mechanism involving the transient reduction of NAD. This Salmonella typhi protein is UDP-glucose 4-epimerase (galE).